Reading from the N-terminus, the 234-residue chain is Leucyl/phenylalanyl-tRNA--protein transferase (234 aa).

Belongs to the L/F-transferase family.

The protein localises to the cytoplasm. The catalysed reaction is N-terminal L-lysyl-[protein] + L-leucyl-tRNA(Leu) = N-terminal L-leucyl-L-lysyl-[protein] + tRNA(Leu) + H(+). The enzyme catalyses N-terminal L-arginyl-[protein] + L-leucyl-tRNA(Leu) = N-terminal L-leucyl-L-arginyl-[protein] + tRNA(Leu) + H(+). It carries out the reaction L-phenylalanyl-tRNA(Phe) + an N-terminal L-alpha-aminoacyl-[protein] = an N-terminal L-phenylalanyl-L-alpha-aminoacyl-[protein] + tRNA(Phe). In terms of biological role, functions in the N-end rule pathway of protein degradation where it conjugates Leu, Phe and, less efficiently, Met from aminoacyl-tRNAs to the N-termini of proteins containing an N-terminal arginine or lysine. This is Leucyl/phenylalanyl-tRNA--protein transferase from Escherichia coli O157:H7 (strain EC4115 / EHEC).